A 250-amino-acid chain; its full sequence is Adenosylcobinamide-GDP ribazoletransferase (250 aa).

6 helical membrane passes run 31 to 51 (ISYL…VYFV), 55 to 75 (FILG…ITGA), 106 to 126 (VGTN…AVLN), 133 to 153 (IIIA…LLMC), 187 to 207 (IGYV…VLFI), and 230 to 250 (NEIA…CGLL).

It belongs to the CobS family. Mg(2+) serves as cofactor.

It localises to the cell membrane. It catalyses the reaction alpha-ribazole + adenosylcob(III)inamide-GDP = adenosylcob(III)alamin + GMP + H(+). The enzyme catalyses alpha-ribazole 5'-phosphate + adenosylcob(III)inamide-GDP = adenosylcob(III)alamin 5'-phosphate + GMP + H(+). The protein operates within cofactor biosynthesis; adenosylcobalamin biosynthesis; adenosylcobalamin from cob(II)yrinate a,c-diamide: step 7/7. Functionally, joins adenosylcobinamide-GDP and alpha-ribazole to generate adenosylcobalamin (Ado-cobalamin). Also synthesizes adenosylcobalamin 5'-phosphate from adenosylcobinamide-GDP and alpha-ribazole 5'-phosphate. This chain is Adenosylcobinamide-GDP ribazoletransferase, found in Clostridium novyi (strain NT).